The chain runs to 293 residues: Phosphatidylcholine-sterol acyltransferase (293 aa).

N-linked (GlcNAc...) asparagine glycosylation is present at N26. S123 serves as the catalytic Nucleophile. Residue N179 is glycosylated (N-linked (GlcNAc...) asparagine). C220 and C263 form a disulfide bridge. The active-site Charge relay system is D252. N-linked (GlcNAc...) asparagine glycosylation is present at N280. The Charge relay system role is filled by H284.

It belongs to the AB hydrolase superfamily. Lipase family.

Its subcellular location is the secreted. It carries out the reaction a sterol + a 1,2-diacyl-sn-glycero-3-phosphocholine = a sterol ester + a 1-acyl-sn-glycero-3-phosphocholine. With respect to regulation, APOA1 is the most potent activator in plasma. Also activated by APOE, APOC1 and APOA4. Central enzyme in the extracellular metabolism of plasma lipoproteins. Synthesized mainly in the liver and secreted into plasma where it converts cholesterol and phosphatidylcholines (lecithins) to cholesteryl esters and lysophosphatidylcholines on the surface of high and low density lipoproteins (HDLs and LDLs). The cholesterol ester is then transported back to the liver. Has a preference for plasma 16:0-18:2 or 18:O-18:2 phosphatidylcholines. Also produced in the brain by primary astrocytes, and esterifies free cholesterol on nascent APOE-containing lipoproteins secreted from glia and influences cerebral spinal fluid (CSF) APOE- and APOA1 levels. Together with APOE and the cholesterol transporter ABCA1, plays a key role in the maturation of glial-derived, nascent lipoproteins. Required for remodeling high-density lipoprotein particles into their spherical forms. The polypeptide is Phosphatidylcholine-sterol acyltransferase (LCAT) (Gerbilliscus gambianus (Gambian gerbil)).